The primary structure comprises 261 residues: Cytochrome c oxidase subunit 3 (261 aa).

Residues 1–15 (MTHQTHAYHMVDPSP) lie on the Mitochondrial matrix side of the membrane. Residues 16 to 34 (WPLTGALSALLMTSGLTMW) form a helical membrane-spanning segment. The Mitochondrial intermembrane segment spans residues 35–40 (FHYHSV). Residues 41 to 66 (TLLLLGLTTNILTMFQWWRDVVREGT) form a helical membrane-spanning segment. At 67–72 (FQGHHT) the chain is on the mitochondrial matrix side. A helical membrane pass occupies residues 73–105 (PVVQESLRYGMILFITSEVLFFTGFFWAFYHSS). Residues 106–128 (LAPTPELGSYWPPVGVYPLNPLE) lie on the Mitochondrial intermembrane side of the membrane. A helical membrane pass occupies residues 129-152 (VPLLNTSVLLASGVTITWAHHSLM). Residues 153–155 (EGN) lie on the Mitochondrial matrix side of the membrane. A helical membrane pass occupies residues 156–183 (RKNMLQALLITILLGVYFTLLQMFEYYE). Over 184–190 (ASFTISD) the chain is Mitochondrial intermembrane. A helical membrane pass occupies residues 191 to 223 (GIYGSTFFVTTGFHGLHVIIGSTFLLTCFIRQL). At 224–232 (KFHFTSNHH) the chain is on the mitochondrial matrix side. Residues 233–256 (FGFEAAAWYWHFVDVVWLFLYLSI) form a helical membrane-spanning segment. Over 257 to 261 (YWWGS) the chain is Mitochondrial intermembrane.

It belongs to the cytochrome c oxidase subunit 3 family. Component of the cytochrome c oxidase (complex IV, CIV), a multisubunit enzyme composed of 14 subunits. The complex is composed of a catalytic core of 3 subunits MT-CO1, MT-CO2 and MT-CO3, encoded in the mitochondrial DNA, and 11 supernumerary subunits COX4I, COX5A, COX5B, COX6A, COX6B, COX6C, COX7A, COX7B, COX7C, COX8 and NDUFA4, which are encoded in the nuclear genome. The complex exists as a monomer or a dimer and forms supercomplexes (SCs) in the inner mitochondrial membrane with NADH-ubiquinone oxidoreductase (complex I, CI) and ubiquinol-cytochrome c oxidoreductase (cytochrome b-c1 complex, complex III, CIII), resulting in different assemblies (supercomplex SCI(1)III(2)IV(1) and megacomplex MCI(2)III(2)IV(2)).

The protein localises to the mitochondrion inner membrane. The enzyme catalyses 4 Fe(II)-[cytochrome c] + O2 + 8 H(+)(in) = 4 Fe(III)-[cytochrome c] + 2 H2O + 4 H(+)(out). Its function is as follows. Component of the cytochrome c oxidase, the last enzyme in the mitochondrial electron transport chain which drives oxidative phosphorylation. The respiratory chain contains 3 multisubunit complexes succinate dehydrogenase (complex II, CII), ubiquinol-cytochrome c oxidoreductase (cytochrome b-c1 complex, complex III, CIII) and cytochrome c oxidase (complex IV, CIV), that cooperate to transfer electrons derived from NADH and succinate to molecular oxygen, creating an electrochemical gradient over the inner membrane that drives transmembrane transport and the ATP synthase. Cytochrome c oxidase is the component of the respiratory chain that catalyzes the reduction of oxygen to water. Electrons originating from reduced cytochrome c in the intermembrane space (IMS) are transferred via the dinuclear copper A center (CU(A)) of subunit 2 and heme A of subunit 1 to the active site in subunit 1, a binuclear center (BNC) formed by heme A3 and copper B (CU(B)). The BNC reduces molecular oxygen to 2 water molecules using 4 electrons from cytochrome c in the IMS and 4 protons from the mitochondrial matrix. The chain is Cytochrome c oxidase subunit 3 (MT-CO3) from Loxodonta africana (African elephant).